The following is a 441-amino-acid chain: Serine carboxypeptidase-like 4 (441 aa).

The first 29 residues, 1–29 (MANNNVYSVLKSLLLLLHLVFLSKQHVDS), serve as a signal peptide directing secretion. 3 disulfide bridges follow: cysteine 88-cysteine 331, cysteine 252-cysteine 266, and cysteine 290-cysteine 297. An N-linked (GlcNAc...) asparagine glycan is attached at asparagine 109. The active site involves serine 184. N-linked (GlcNAc...) asparagine glycosylation is present at asparagine 350. Aspartate 366 is an active-site residue. Residue asparagine 382 is glycosylated (N-linked (GlcNAc...) asparagine). The active site involves histidine 419.

It belongs to the peptidase S10 family. Ubiquitous.

It is found in the secreted. Its function is as follows. Probable carboxypeptidase. The protein is Serine carboxypeptidase-like 4 (SCPL4) of Arabidopsis thaliana (Mouse-ear cress).